An 894-amino-acid chain; its full sequence is Probable ion channel SYM8 (894 aa).

The segment at 1-124 (MAKSNEEPNS…PPSLPIAITK (124 aa)) is disordered. Composition is skewed to polar residues over residues 7-16 (EPNSNLNTNK), 24-33 (TLAQQPSLNL), and 44-63 (IGNSSSSSTKTDFEQQQRNY). The next 4 membrane-spanning stretches (helical) occupy residues 134–154 (SPIFYLFVITCVIFVPYSAFL), 204–224 (TISLYIVLFTLVLPFILYKYI), 267–287 (LALLFATLFLIAFGGLALYAV), and 319–339 (IVSVSISAGGMLIFAMMLGLV). RCK N-terminal domains are found at residues 360-501 (RNHV…ETVV) and 620-769 (PEKI…DKSI). The stretch at 390–415 (VIVVLAEKEKEEMEMDIAKLEFDFMG) forms a coiled coil.

It belongs to the castor/pollux (TC 1.A.1.23) family. As to quaternary structure, homotetramer.

The protein localises to the nucleus membrane. Functionally, required for both rhizobial and mycorrhizal symbiosis. Involved in Nod-factor-induced calcium spiking. May induce a change in membrane polarization that activates the opening of a calcium channel required for calcium spiking. Might be calcium gated. The polypeptide is Probable ion channel SYM8 (SYM8) (Pisum sativum (Garden pea)).